A 139-amino-acid chain; its full sequence is ATP synthase epsilon chain (139 aa).

Belongs to the ATPase epsilon chain family. In terms of assembly, F-type ATPases have 2 components, CF(1) - the catalytic core - and CF(0) - the membrane proton channel. CF(1) has five subunits: alpha(3), beta(3), gamma(1), delta(1), epsilon(1). CF(0) has three main subunits: a, b and c.

Its subcellular location is the cell inner membrane. In terms of biological role, produces ATP from ADP in the presence of a proton gradient across the membrane. The protein is ATP synthase epsilon chain of Salmonella typhimurium (strain LT2 / SGSC1412 / ATCC 700720).